Reading from the N-terminus, the 226-residue chain is MSKKGKKYIEAFSKVDKSKFYSIEDAISLLKEIKFVKFDETIDISVNLNLKKNHTVRDTIVLPNQFMKPKRILVFAKGDRADEARAFGATYVGDDDLINKIKSGWDEFDIVVATPDMMKDVGRLGPILGKRGLMPNPKTQTVTNNLKDAINSLKKGRTEFRANKNGVISFSFGKSSMDNEKIKENYEEFIKEVVKKRPSDLKGTFIDSIYISSTMGPSIRVEFVWR.

It belongs to the universal ribosomal protein uL1 family. As to quaternary structure, part of the 50S ribosomal subunit.

Its function is as follows. Binds directly to 23S rRNA. The L1 stalk is quite mobile in the ribosome, and is involved in E site tRNA release. In terms of biological role, protein L1 is also a translational repressor protein, it controls the translation of the L11 operon by binding to its mRNA. The sequence is that of Large ribosomal subunit protein uL1 from Borreliella afzelii (strain PKo) (Borrelia afzelii).